Here is a 417-residue protein sequence, read N- to C-terminus: MLKREMNIASYDPELWQAMEQEVVRQEEHIELIASENYTSPRVMQAQGSQLTNKYAEGYPGKRYYGGCEYVDVVEQLAIDRAKALFGADYANVQPHSGSQANAAVYMALLQPGDTILGMNLAHGGHLTHGSPVNFSGKLYNVVPYGIDESGKIDYDDIAAQAEKHQPKMIIGGFSAYSGVVDWAKMREIADSIGAYLFVDMAHVAGLIAAGVYPNPVPHAHIVTTTTHKTLAGPRGGLILAKGGDEELYKKLNSSVFPGCQGGPLMHVIAGKAVALKEAMEPEFKAYQHQVADNAKAMVEVFLARGYKVVSGSTENHLFLLDLVDKNITGKDADAALGRANITVNKNSVPNDPKSPFVTSGVRIGTPAITRRGFKQAEARELAGWMCDVLDNINDEVTIEMIKQKVLAICAKYPVYA.

Residues Leu121 and 125–127 (GHL) each bind (6S)-5,6,7,8-tetrahydrofolate. Position 229 is an N6-(pyridoxal phosphate)lysine (Lys229). Residue 355-357 (SPF) participates in (6S)-5,6,7,8-tetrahydrofolate binding.

It belongs to the SHMT family. As to quaternary structure, homodimer. The cofactor is pyridoxal 5'-phosphate.

The protein localises to the cytoplasm. The catalysed reaction is (6R)-5,10-methylene-5,6,7,8-tetrahydrofolate + glycine + H2O = (6S)-5,6,7,8-tetrahydrofolate + L-serine. It functions in the pathway one-carbon metabolism; tetrahydrofolate interconversion. The protein operates within amino-acid biosynthesis; glycine biosynthesis; glycine from L-serine: step 1/1. In terms of biological role, catalyzes the reversible interconversion of serine and glycine with tetrahydrofolate (THF) serving as the one-carbon carrier. This reaction serves as the major source of one-carbon groups required for the biosynthesis of purines, thymidylate, methionine, and other important biomolecules. Also exhibits THF-independent aldolase activity toward beta-hydroxyamino acids, producing glycine and aldehydes, via a retro-aldol mechanism. This is Serine hydroxymethyltransferase from Photorhabdus laumondii subsp. laumondii (strain DSM 15139 / CIP 105565 / TT01) (Photorhabdus luminescens subsp. laumondii).